A 503-amino-acid polypeptide reads, in one-letter code: AMP phosphorylase (503 aa).

AMP-binding positions include glycine 168, 194–199, and threonine 203; that span reads SRAITS. Catalysis depends on aspartate 256, which acts as the Proton donor. Serine 264 and lysine 288 together coordinate AMP.

The protein belongs to the thymidine/pyrimidine-nucleoside phosphorylase family. Type 2 subfamily.

It carries out the reaction AMP + phosphate = alpha-D-ribose 1,5-bisphosphate + adenine. The catalysed reaction is CMP + phosphate = cytosine + alpha-D-ribose 1,5-bisphosphate. It catalyses the reaction UMP + phosphate = alpha-D-ribose 1,5-bisphosphate + uracil. In terms of biological role, catalyzes the conversion of AMP and phosphate to adenine and ribose 1,5-bisphosphate (R15P). Exhibits phosphorylase activity toward CMP and UMP in addition to AMP. Functions in an archaeal AMP degradation pathway, together with R15P isomerase and RubisCO. This Pyrococcus abyssi (strain GE5 / Orsay) protein is AMP phosphorylase (deoA).